A 415-amino-acid polypeptide reads, in one-letter code: Lysosome-associated membrane glycoprotein 2 (415 aa).

The first 25 residues, 1–25 (MCLSPVKGAKLILIFLFLGAVQSNA), serve as a signal peptide directing secretion. The segment at 26–188 (LIVNLTDSKG…SKNEQVCEED (163 aa)) is first lumenal domain. Residues 26 to 379 (LIVNLTDSKG…AQDCSADEDN (354 aa)) lie on the Lumenal side of the membrane. 7 N-linked (GlcNAc...) asparagine glycosylation sites follow: N29, N45, N54, N57, N97, N115, and N175. A disulfide bridge connects residues C37 and C75. C149 and C185 are disulfide-bonded. The tract at residues 189 to 233 (QTPTTVAPIIHTTAPSTTTTLTPTSTPTPTPTPTPTVGNYSIRNG) is hinge. Over residues 202–213 (APSTTTTLTPTS) the composition is skewed to low complexity. A disordered region spans residues 202–227 (APSTTTTLTPTSTPTPTPTPTPTVGN). 9 N-linked (GlcNAc...) asparagine glycosylation sites follow: N227, N234, N247, N265, N280, N312, N317, N322, and N361. A second lumenal domain region spans residues 234-379 (NTTCLLATMG…AQDCSADEDN (146 aa)). A disulfide bridge connects residues C237 and C270. A disulfide bond links C336 and C373. A helical transmembrane segment spans residues 380–404 (FLVPIAVGAALGGVLILVLLAYFIG). At 405 to 415 (LKRHHTGYEQF) the chain is on the cytoplasmic side. The segment at 406–409 (KRHH) is important for binding and subsequent lysosomal degradation of target proteins.

Belongs to the LAMP family. In terms of assembly, monomer. Forms large homooligomers. Interacts (via its cytoplasmic region) with HSPA8; HSPA8 mediates recruitment of proteins with a KFERQ motif to the surface of the lysosome for chaperone-mediated autophagy. Interacts with HSP90 in the lysosome lumen; this enhances LAMP2 stability. Interacts with MLLT11. Interacts with ABCB9. Interacts with FURIN. Interacts with CT55; this interaction may be important for LAMP2 protein stability. Interacts with TMEM175; inhibiting the proton channel activity of TMEM175. Forms a ternary complex with RAB7A and RUFY4 (via RUN domain); the interaction with RAB7A is mediated by RUFY4 (via RUN and coiled coil domains). In terms of processing, extensively N-glycosylated. Contains a minor proportion of O-linked glycans. In terms of tissue distribution, detected in liver and kidney (at protein level). Detected in liver and kidney.

It localises to the lysosome membrane. It is found in the endosome membrane. The protein localises to the cytoplasmic vesicle. The protein resides in the autophagosome membrane. Its subcellular location is the cell membrane. In terms of biological role, lysosomal membrane glycoprotein which plays an important role in lysosome biogenesis, lysosomal pH regulation and autophagy. Acts as an important regulator of lysosomal lumen pH regulation by acting as a direct inhibitor of the proton channel TMEM175, facilitating lysosomal acidification for optimal hydrolase activity. Plays an important role in chaperone-mediated autophagy, a process that mediates lysosomal degradation of proteins in response to various stresses and as part of the normal turnover of proteins with a long biological half-live. Functions by binding target proteins, such as GAPDH, NLRP3 and MLLT11, and targeting them for lysosomal degradation. In the chaperone-mediated autophagy, acts downstream of chaperones, such as HSPA8/HSC70, which recognize and bind substrate proteins and mediate their recruitment to lysosomes, where target proteins bind LAMP2. Plays a role in lysosomal protein degradation in response to starvation. Required for the fusion of autophagosomes with lysosomes during autophagy. Cells that lack LAMP2 express normal levels of VAMP8, but fail to accumulate STX17 on autophagosomes, which is the most likely explanation for the lack of fusion between autophagosomes and lysosomes. Required for normal degradation of the contents of autophagosomes. Required for efficient MHC class II-mediated presentation of exogenous antigens via its function in lysosomal protein degradation; antigenic peptides generated by proteases in the endosomal/lysosomal compartment are captured by nascent MHC II subunits. Is not required for efficient MHC class II-mediated presentation of endogenous antigens. This chain is Lysosome-associated membrane glycoprotein 2 (Lamp2), found in Mus musculus (Mouse).